Reading from the N-terminus, the 330-residue chain is Olfactory receptor 5P70 (330 aa).

Residues 1–28 (MAFLEDGNHTIVTEFILLGLTDDPVLRD) lie on the Extracellular side of the membrane. N-linked (GlcNAc...) asparagine glycosylation occurs at Asn8. A helical transmembrane segment spans residues 29–49 (ILFTIILCIYLVTVSGNLSTI). The Cytoplasmic portion of the chain corresponds to 50 to 57 (LLIRVSSQ). A helical transmembrane segment spans residues 58–78 (LHHPMYFFLSHLASVDIGISS). Over 79-102 (SVTPNMLANFLVKPNTISYIGCSI) the chain is Extracellular. The cysteines at positions 100 and 192 are disulfide-linked. The chain crosses the membrane as a helical span at residues 103–123 (QFTSAVFLATVECFLLAAMAY). Residues 124–136 (DRFVAICNPLLYS) are Cytoplasmic-facing. A helical membrane pass occupies residues 137–157 (TKMSREACIQLVVGSYIQGLL). Over 158–199 (NASFFTLSFFSLIFCGPNRINHFYCDLAPLVELSCSDVTLAV) the chain is Extracellular. The helical transmembrane segment at 200–220 (VITSISAGFITLTTVFVIAIS) threads the bilayer. Residues 221-240 (YSCIFITIMKMHSTESRYKA) lie on the Cytoplasmic side of the membrane. The helical transmembrane segment at 241-261 (FSTCTSHLTAVTLFYGTTMFI) threads the bilayer. The Extracellular portion of the chain corresponds to 262 to 274 (YVMPKSSYSTDQN). The chain crosses the membrane as a helical span at residues 275–295 (KVLSVFYMVVIPMLNPLIYSL). Residues 296 to 330 (RNNEIKGALKRYLGKKIFSYGNLFCKTHYNDTHQV) lie on the Cytoplasmic side of the membrane.

It belongs to the G-protein coupled receptor 1 family.

It is found in the cell membrane. Its function is as follows. Potential odorant receptor. This is Olfactory receptor 5P70 from Mus musculus (Mouse).